The primary structure comprises 473 residues: Photosystem II CP43 reaction center protein (473 aa).

Positions 1 to 14 (MKTLYSLRRSYPVE) are excised as a propeptide. Thr15 bears the N-acetylthreonine mark. Thr15 carries the post-translational modification Phosphothreonine. 5 helical membrane passes run 69–93 (LFEV…PHLA), 134–155 (LIGP…KDRN), 178–200 (KALY…RKIT), 255–275 (KPFA…LSYS), and 291–312 (WFNN…ASQA). Position 367 (Glu367) interacts with [CaMn4O5] cluster. The helical transmembrane segment at 447–471 (RARAAAAGFEKGIDRDFEPVLSMTP) threads the bilayer.

The protein belongs to the PsbB/PsbC family. PsbC subfamily. As to quaternary structure, PSII is composed of 1 copy each of membrane proteins PsbA, PsbB, PsbC, PsbD, PsbE, PsbF, PsbH, PsbI, PsbJ, PsbK, PsbL, PsbM, PsbT, PsbX, PsbY, PsbZ, Psb30/Ycf12, at least 3 peripheral proteins of the oxygen-evolving complex and a large number of cofactors. It forms dimeric complexes. Binds multiple chlorophylls and provides some of the ligands for the Ca-4Mn-5O cluster of the oxygen-evolving complex. It may also provide a ligand for a Cl- that is required for oxygen evolution. PSII binds additional chlorophylls, carotenoids and specific lipids. serves as cofactor.

It localises to the plastid. Its subcellular location is the chloroplast thylakoid membrane. One of the components of the core complex of photosystem II (PSII). It binds chlorophyll and helps catalyze the primary light-induced photochemical processes of PSII. PSII is a light-driven water:plastoquinone oxidoreductase, using light energy to abstract electrons from H(2)O, generating O(2) and a proton gradient subsequently used for ATP formation. The chain is Photosystem II CP43 reaction center protein from Abies alba (Edeltanne).